A 142-amino-acid chain; its full sequence is MVLSANDKTNVKNVFTKIGGHAEEYGAETLERMFTTYPPTKTYFPHFDLHHGSAQIKAHGKKVVGALIEAVNHIDDIAGALSKLSDLHAQKLRVDPVNFKLLGQCFLVVVAIHHPSVLTPEVHASLDKFLCAVGNVLTAKYR.

The Globin domain occupies 2–142 (VLSANDKTNV…VGNVLTAKYR (141 aa)). Position 59 (H59) interacts with O2. A heme b-binding site is contributed by H88.

It belongs to the globin family. As to quaternary structure, heterotetramer of two alpha chains and two beta chains. As to expression, red blood cells.

Its function is as follows. Involved in oxygen transport from the lung to the various peripheral tissues. This is Hemoglobin subunit alpha-A (HBAA) from Accipiter gentilis (Northern goshawk).